The primary structure comprises 295 residues: Ubiquitin-conjugating enzyme E2-34 kDa (295 aa).

In terms of domain architecture, UBC core spans threonine 7 to glutamine 169. Cysteine 95 acts as the Glycyl thioester intermediate in catalysis. The interval isoleucine 185–isoleucine 295 is disordered. Serine 186 carries the phosphoserine modification. The span at lysine 189–alanine 200 shows a compositional bias: basic and acidic residues. Acidic residues-rich tracts occupy residues serine 207–aspartate 226 and glutamate 234–aspartate 265. Positions valine 269–glutamate 279 are enriched in basic and acidic residues. Residues serine 282 and serine 292 each carry the phosphoserine modification.

This sequence belongs to the ubiquitin-conjugating enzyme family. In terms of assembly, interacts with CDC53. Component of the E3 ubiquitin ligase complexes SCF with CDC53, SKP1/CBF3D, HRT1 and some F-box proteins like MET30 and CDC4.

It localises to the cytoplasm. It is found in the nucleus. The enzyme catalyses S-ubiquitinyl-[E1 ubiquitin-activating enzyme]-L-cysteine + [E2 ubiquitin-conjugating enzyme]-L-cysteine = [E1 ubiquitin-activating enzyme]-L-cysteine + S-ubiquitinyl-[E2 ubiquitin-conjugating enzyme]-L-cysteine.. It functions in the pathway protein modification; protein ubiquitination. Catalyzes the covalent attachment of ubiquitin to other proteins. Capable, in vitro, to ubiquitinate histone H2A. Its function is as follows. Mediates the initiation of DNA replication (transition of G1 to S phase in cell cycle). Essential component of the E3 ubiquitin ligase complex SCF (SKP1-CUL1-F-box protein), which mediates the ubiquitination and subsequent proteasomal degradation of target proteins. Involved in the regulation of methionine biosynthesis genes and in the degradation of CDC6 together with CDC4 and CDC53. This chain is Ubiquitin-conjugating enzyme E2-34 kDa (CDC34), found in Saccharomyces cerevisiae (strain ATCC 204508 / S288c) (Baker's yeast).